A 433-amino-acid chain; its full sequence is Chaperone SurA (433 aa).

Residues 1 to 24 form the signal peptide; that stretch reads MDGIKLLLSIIILYFYTYINCAIA. PpiC domains lie at 173–274 and 285–385; these read NTTF…KVHD and ITEV…QLQN.

It localises to the periplasm. It carries out the reaction [protein]-peptidylproline (omega=180) = [protein]-peptidylproline (omega=0). Chaperone involved in the correct folding and assembly of outer membrane proteins. Recognizes specific patterns of aromatic residues and the orientation of their side chains, which are found more frequently in integral outer membrane proteins. May act in both early periplasmic and late outer membrane-associated steps of protein maturation. The protein is Chaperone SurA of Baumannia cicadellinicola subsp. Homalodisca coagulata.